Consider the following 347-residue polypeptide: MDVLGAAALALFLVPLLIVAEQGRTWGWGSPAALALFALGAAGLAVFIPVELRRGDEAILPLGLFRRGSIALCSAVNFTIGVGIFGTVTTLPLFLQMVQGRTPTQAGLVVIPFMLGTIASQMVSGKLIASSGRFKKLAIVGLGSMAGALLAMATTGATTPMWGIVLIVLWLGVGIGLSQTVITSPMQNSAPKSQLGVANGASACAGQIGGSTGIAVLFSVMFAVALGRLADLLHTPRYERLLTDPAITGDPANHRFLDMAESGQGAGINLDDTSLLNGIDARLMQPVTDSFAHGFHIMFLPGGVVLLAGFVMTWFLRELQEETAPEEERPAESGAGAKNGPLPASDA.

8 helical membrane passes run Val-3–Ala-20, Ser-30–Leu-52, Cys-73–Leu-95, Leu-108–Ser-130, Leu-137–Gly-156, Met-161–Thr-183, Cys-204–Leu-226, and Gly-294–Leu-316. The tract at residues Glu-321–Ala-347 is disordered.

Belongs to the major facilitator superfamily. TCR/Tet family.

It localises to the cell membrane. Functionally, resistance to tetracycline by an active tetracycline efflux. This is an energy-dependent process that decreases the accumulation of the antibiotic in whole cells. This protein functions as a metal-tetracycline/H(+) antiporter. The protein is Tetracycline resistance determinant (tetB) of Streptomyces rimosus.